Consider the following 223-residue polypeptide: UPF0502 protein Avin_04790 (223 aa).

This sequence belongs to the UPF0502 family.

The sequence is that of UPF0502 protein Avin_04790 from Azotobacter vinelandii (strain DJ / ATCC BAA-1303).